The chain runs to 97 residues: NELL2-interacting cell ontogeny regulator 1 (97 aa).

Positions 1–35 (MAPLPPCGPPRSPPPRLLLLLLLLSATLLGAPARA) are cleaved as a signal peptide.

The protein belongs to the NICOL family. In terms of assembly, interacts with NELL2; triggers epididymal differentiation. Interacts with cell surface receptor TFRC; the interaction mediates uptake of NICOL1 into fibroblasts.

Its subcellular location is the secreted. The protein localises to the cytoplasm. It localises to the perinuclear region. Functionally, mRNA-binding protein which interacts with a range of target mRNAs including SERPINE1, ACTA2, CCN2 and COL4A1 and may promote extracellular matrix production. Binds to the 3'-UTR of SERPINE1 mRNA and stabilizes the mRNA, possibly by competing for binding with SERBP1 and preventing SERBP1-mediated mRNA degradation. Also binds to the 3'-UTR of ACTA2. Testis-derived lumicrine factor that triggers epididymal differentiation and sperm maturation. This Bos taurus (Bovine) protein is NELL2-interacting cell ontogeny regulator 1.